The chain runs to 539 residues: Monocarboxylate transporter 8 (539 aa).

The tract at residues 1-92 (MALQSQASEE…VETRGTARGF (92 aa)) is disordered. Ala2 carries the post-translational modification N-acetylalanine. Over 2–96 (ALQSQASEEA…GTARGFQPPE (95 aa)) the chain is Cytoplasmic. Residues 31–41 (PESEPEPEPEP) are compositionally biased toward acidic residues. Over residues 42–64 (EPVPVPPPEPQPEPQPLPDPAPL) the composition is skewed to pro residues. The chain crosses the membrane as a helical span at residues 97–117 (GGFGWVVVFAATWCNGSIFGI). Residues 118–143 (HNSVGILYSMLLEEEKEKNRQVEFQA) are Extracellular-facing. Residues 144-164 (AWVGALAMGMIFFCSPIVSIF) form a helical membrane-spanning segment. At 165–171 (TDRLGCR) the chain is on the cytoplasmic side. The chain crosses the membrane as a helical span at residues 172–192 (ITATAGAAVAFIGLHTSSFTS). Over 193–200 (SLSLRYFT) the chain is Extracellular. The chain crosses the membrane as a helical span at residues 201-221 (YGILFGCGCSFAFQPSLVILG). At 222 to 229 (HYFQRRLG) the chain is on the cytoplasmic side. A helical membrane pass occupies residues 230 to 250 (LANGVVSAGSSIFSMSFPFLI). Residues 251 to 258 (RMLGDKIK) lie on the Extracellular side of the membrane. Residues 259-279 (LAQTFQVLSTFMFVLMLLSLT) form a helical membrane-spanning segment. Residues 280–322 (YRPLLPSSQDTPSKRGVRTLHQRFLAQLRKYFNMRVFRQRTYR) are Cytoplasmic-facing. The helical transmembrane segment at 323 to 343 (IWAFGIAAAALGYFVPYVHLM) threads the bilayer. At 344-356 (KYVEEEFSEIKET) the chain is on the extracellular side. The helical transmembrane segment at 357-377 (WVLLVCIGATSGLGRLVSGHI) threads the bilayer. Residues 378–386 (SDSIPGLKK) lie on the Cytoplasmic side of the membrane. A helical transmembrane segment spans residues 387 to 407 (IYLQVLSFLLLGLMSMMIPLC). Topologically, residues 408–409 (RD) are extracellular. A helical membrane pass occupies residues 410–430 (FGGLIVVCLFLGLCDGFFITI). At 431–447 (MAPIAFELVGPMQASQA) the chain is on the cytoplasmic side. A helical transmembrane segment spans residues 448–468 (IGYLLGMMALPMIAGPPIAGL). Residues 469-477 (LRNCFGDYH) lie on the Extracellular side of the membrane. Residues 478-498 (VAFYFAGVPPIIGAVILFFVP) form a helical membrane-spanning segment. Over 499–539 (LMHQRMFKKEQRDSSKDKMLAPDPDPNGELLPGSPNPEEPI) the chain is Cytoplasmic. Residues 508-518 (EQRDSSKDKML) are compositionally biased toward basic and acidic residues. A disordered region spans residues 508–539 (EQRDSSKDKMLAPDPDPNGELLPGSPNPEEPI).

It belongs to the major facilitator superfamily. Monocarboxylate porter (TC 2.A.1.13) family. As to quaternary structure, monomer. Homodimer. Homooligomer. As to expression, highly expressed in liver and heart. In adult brain tissue expression is largely confined to endothelial cells of the blood-brain barrier (at protein level).

It localises to the cell membrane. Its subcellular location is the apical cell membrane. The catalysed reaction is 3,3',5-triiodo-L-thyronine(out) = 3,3',5-triiodo-L-thyronine(in). It catalyses the reaction L-thyroxine(out) = L-thyroxine(in). The enzyme catalyses 3,3',5'-triiodo-L-thyronine(out) = 3,3',5'-triiodo-L-thyronine(in). It carries out the reaction 3,3'-diiodo-L-thyronine(out) = 3,3'-diiodo-L-thyronine(in). Functionally, specific thyroid hormone transmembrane transporter, that mediates both uptake and efflux of thyroid hormones across the cell membrane independently of pH or a Na(+) gradient. Major substrates are the iodothyronines T3 and T4 and to a lesser extent rT3 and 3,3-diiodothyronine (3,3'-T2). Acts as an important mediator of thyroid hormone transport, especially T3, through the blood-brain barrier. The sequence is that of Monocarboxylate transporter 8 (SLC16A2) from Homo sapiens (Human).